The sequence spans 373 residues: Flagellar P-ring protein (373 aa).

Positions 1–26 (MKLFFRFVTLVAVLAMSLANVAPAWA) are cleaved as a signal peptide.

The protein belongs to the FlgI family. In terms of assembly, the basal body constitutes a major portion of the flagellar organelle and consists of four rings (L,P,S, and M) mounted on a central rod.

Its subcellular location is the periplasm. It is found in the bacterial flagellum basal body. Assembles around the rod to form the L-ring and probably protects the motor/basal body from shearing forces during rotation. The polypeptide is Flagellar P-ring protein (Rhizobium johnstonii (strain DSM 114642 / LMG 32736 / 3841) (Rhizobium leguminosarum bv. viciae)).